An 84-amino-acid polypeptide reads, in one-letter code: MSEPIESLTVDAVLDATGLFCPEPVMMLHQKVRDLPPSGLLKVIATDPSTCRDIPKFCVFLGHELVAEQAEESTFLYWIRKKSD.

The active-site Cysteine persulfide intermediate is Cys21.

It belongs to the sulfur carrier protein TusA family.

The protein resides in the cytoplasm. Its function is as follows. Sulfur carrier protein which probably makes part of a sulfur-relay system. This is Sulfur carrier protein TusA from Pseudomonas syringae pv. tomato (strain ATCC BAA-871 / DC3000).